The following is a 750-amino-acid chain: Photosystem I P700 chlorophyll a apoprotein A1 (750 aa).

Transmembrane regions (helical) follow at residues 70-93 (VFSA…FHGA), 156-179 (LYCT…FHYH), 195-219 (LNHH…HVSL), 291-309 (IAHH…GHMY), 346-369 (WHAQ…HHMY), 385-411 (LSLF…IFMV), 433-455 (AIIS…LYIH), and 531-549 (FLVH…LILL). [4Fe-4S] cluster-binding residues include cysteine 573 and cysteine 582. 2 consecutive transmembrane segments (helical) span residues 589-610 (HVFL…HFSW) and 664-686 (LSAY…MFLF). Histidine 675 contacts chlorophyll a'. Chlorophyll a-binding residues include methionine 683 and tyrosine 691. Position 692 (tryptophan 692) interacts with phylloquinone. The helical transmembrane segment at 724 to 744 (AVGVTHYLLGGIATTWAFFLA) threads the bilayer.

This sequence belongs to the PsaA/PsaB family. The PsaA/B heterodimer binds the P700 chlorophyll special pair and subsequent electron acceptors. PSI consists of a core antenna complex that captures photons, and an electron transfer chain that converts photonic excitation into a charge separation. The eukaryotic PSI reaction center is composed of at least 11 subunits. P700 is a chlorophyll a/chlorophyll a' dimer, A0 is one or more chlorophyll a, A1 is one or both phylloquinones and FX is a shared 4Fe-4S iron-sulfur center. is required as a cofactor.

Its subcellular location is the plastid. It localises to the chloroplast thylakoid membrane. The catalysed reaction is reduced [plastocyanin] + hnu + oxidized [2Fe-2S]-[ferredoxin] = oxidized [plastocyanin] + reduced [2Fe-2S]-[ferredoxin]. Functionally, psaA and PsaB bind P700, the primary electron donor of photosystem I (PSI), as well as the electron acceptors A0, A1 and FX. PSI is a plastocyanin-ferredoxin oxidoreductase, converting photonic excitation into a charge separation, which transfers an electron from the donor P700 chlorophyll pair to the spectroscopically characterized acceptors A0, A1, FX, FA and FB in turn. Oxidized P700 is reduced on the lumenal side of the thylakoid membrane by plastocyanin. In Amborella trichopoda, this protein is Photosystem I P700 chlorophyll a apoprotein A1.